A 224-amino-acid chain; its full sequence is 2-C-methyl-D-erythritol 4-phosphate cytidylyltransferase (224 aa).

The protein belongs to the IspD/TarI cytidylyltransferase family. IspD subfamily.

The catalysed reaction is 2-C-methyl-D-erythritol 4-phosphate + CTP + H(+) = 4-CDP-2-C-methyl-D-erythritol + diphosphate. The protein operates within isoprenoid biosynthesis; isopentenyl diphosphate biosynthesis via DXP pathway; isopentenyl diphosphate from 1-deoxy-D-xylulose 5-phosphate: step 2/6. Catalyzes the formation of 4-diphosphocytidyl-2-C-methyl-D-erythritol from CTP and 2-C-methyl-D-erythritol 4-phosphate (MEP). The polypeptide is 2-C-methyl-D-erythritol 4-phosphate cytidylyltransferase (Caldicellulosiruptor saccharolyticus (strain ATCC 43494 / DSM 8903 / Tp8T 6331)).